A 182-amino-acid chain; its full sequence is CDP-diacylglycerol--glycerol-3-phosphate 3-phosphatidyltransferase (182 aa).

The Cytoplasmic portion of the chain corresponds to 1 to 12; the sequence is MQLNIPTWLTLF. Residues 13–37 form a helical membrane-spanning segment; that stretch reads RVVLIPFFVLAFYLPFVWAPMVCAI. The Periplasmic portion of the chain corresponds to 38 to 60; that stretch reads IFVFAAATDWFDGFLARRWKQTT. The chain crosses the membrane as a helical span at residues 61–81; sequence RFGAFLDPVADKVMVAIALVL. Residues 82-86 are Cytoplasmic-facing; it reads VAEHY. The helical transmembrane segment at 87 to 107 threads the bilayer; sequence HVWWITLPAATMIAREIIISS. Residues 108 to 145 are Periplasmic-facing; it reads LREWMAEIGKRSSVAVSWIGKVKTTAQMGSLVGLLWRP. Residues 146-168 traverse the membrane as a helical segment; the sequence is DHNIELASFVLLYIAAVLTFWSM. Residues 169-181 are Cytoplasmic-facing; that stretch reads FQYLNAAWKDLLE.

It belongs to the CDP-alcohol phosphatidyltransferase class-I family.

Its subcellular location is the cell inner membrane. It carries out the reaction a CDP-1,2-diacyl-sn-glycerol + sn-glycerol 3-phosphate = a 1,2-diacyl-sn-glycero-3-phospho-(1'-sn-glycero-3'-phosphate) + CMP + H(+). It participates in phospholipid metabolism; phosphatidylglycerol biosynthesis; phosphatidylglycerol from CDP-diacylglycerol: step 1/2. In terms of biological role, catalyzes the conversion of cytidine diphosphate diacylglycerol (CDP-DG) and glycerol 3-phosphate into phosphatidylglycerol. Essential for the synthesis of anionic phospholipids, thereby playing a role in balancing the ratio of zwitterionic and anionic phospholipids, which is thought to be important for normal membrane function. In Yersinia enterocolitica serotype O:8 / biotype 1B (strain NCTC 13174 / 8081), this protein is CDP-diacylglycerol--glycerol-3-phosphate 3-phosphatidyltransferase.